Here is a 208-residue protein sequence, read N- to C-terminus: Protein-L-isoaspartate O-methyltransferase (208 aa).

The active site involves serine 59.

Belongs to the methyltransferase superfamily. L-isoaspartyl/D-aspartyl protein methyltransferase family.

The protein localises to the cytoplasm. The enzyme catalyses [protein]-L-isoaspartate + S-adenosyl-L-methionine = [protein]-L-isoaspartate alpha-methyl ester + S-adenosyl-L-homocysteine. Functionally, catalyzes the methyl esterification of L-isoaspartyl residues in peptides and proteins that result from spontaneous decomposition of normal L-aspartyl and L-asparaginyl residues. It plays a role in the repair and/or degradation of damaged proteins. The sequence is that of Protein-L-isoaspartate O-methyltransferase from Proteus mirabilis (strain HI4320).